A 553-amino-acid chain; its full sequence is Threonylcarbamoyladenosine tRNA methylthiotransferase (553 aa).

The disordered stretch occupies residues 21-61; it reads SAEDVKPQERYQNKKSVTVRAKKRVQIKPETDAEEKPTPRP. 2 stretches are compositionally biased toward basic and acidic residues: residues 23 to 32 and 47 to 58; these read EDVKPQERYQ and IKPETDAEEKPT. The 108-residue stretch at 72–179 folds into the MTTase N-terminal domain; the sequence is QKVFVKTWGC…VVEVVEETLK (108 aa). [4Fe-4S] cluster-binding residues include Cys81, Cys116, Cys145, Cys221, Cys225, and Cys228. The Radical SAM core domain occupies 207–438; sequence RKNPLIEIIS…DLFYSYEPYA (232 aa). The TRAM domain occupies 438–500; it reads AQRVGEMYTV…KFSMVGEILD (63 aa). Residues 533–553 traverse the membrane as a helical segment; sequence VGIALVVGSLAFLLQLLIRFL.

Belongs to the methylthiotransferase family. CDKAL1 subfamily. It depends on [4Fe-4S] cluster as a cofactor.

The protein localises to the membrane. It carries out the reaction N(6)-L-threonylcarbamoyladenosine(37) in tRNA + (sulfur carrier)-SH + AH2 + 2 S-adenosyl-L-methionine = 2-methylsulfanyl-N(6)-L-threonylcarbamoyladenosine(37) in tRNA + (sulfur carrier)-H + 5'-deoxyadenosine + L-methionine + A + S-adenosyl-L-homocysteine + 2 H(+). Catalyzes the methylthiolation of N6-threonylcarbamoyladenosine (t(6)A), leading to the formation of 2-methylthio-N6-threonylcarbamoyladenosine (ms(2)t(6)A) at position 37 in tRNAs that read codons beginning with adenine. This chain is Threonylcarbamoyladenosine tRNA methylthiotransferase, found in Drosophila pseudoobscura pseudoobscura (Fruit fly).